Consider the following 121-residue polypeptide: UPF0738 protein RBAM_011600 (121 aa).

The protein belongs to the UPF0738 family.

The chain is UPF0738 protein RBAM_011600 from Bacillus velezensis (strain DSM 23117 / BGSC 10A6 / LMG 26770 / FZB42) (Bacillus amyloliquefaciens subsp. plantarum).